A 381-amino-acid polypeptide reads, in one-letter code: E3 ubiquitin-protein ligase KCMF1 (381 aa).

S2 is subject to N-acetylserine. Phosphoserine is present on S2. A ZZ-type zinc finger spans residues 4 to 60; that stretch reads HEGVSCDACLKGNFRGRRYKCLICYDYDLCASCYESGATTTRHTTDHPMQCILTRVD. Residues C9, C12, C24, C27, C33, C36, H46, and H50 each coordinate Zn(2+). A C2H2-type zinc finger spans residues 78-101; that stretch reads FTCPYCGKMGYTETSLQEHVTSEH. The tract at residues 154–193 is disordered; that stretch reads MFHPGRGLGGPRARRSNMHFTSSSTGGLSSSQSSYSPSNR. 3 positions are modified to phosphoserine: S169, S189, and S212. Residues 175-191 show a composition bias toward low complexity; sequence SSSTGGLSSSQSSYSPS. Positions 225-257 form a coiled coil; it reads SQLQQLQMQLQLERQHAQAARQQLETARNATRR. Residues 294-314 are disordered; sequence TRLNDPKMSETERQSMESERA. The segment covering 297-314 has biased composition (basic and acidic residues); sequence NDPKMSETERQSMESERA. Phosphoserine is present on residues S335 and S336.

This sequence belongs to the KCMF1 family. Component of the SIFI complex, composed of KCMF1, UBR4 and calmodulin (CALM1, CALM2 or CALM3). Spleen, small intestine, ovary, peripheral blood, lung, kidney and pancreas. Expressed at low levels in the thymus, prostate, testis, colon, heart, brain, placenta and liver.

It is found in the cytoplasm. It localises to the late endosome. The protein localises to the lysosome. The catalysed reaction is S-ubiquitinyl-[E2 ubiquitin-conjugating enzyme]-L-cysteine + [acceptor protein]-L-lysine = [E2 ubiquitin-conjugating enzyme]-L-cysteine + N(6)-ubiquitinyl-[acceptor protein]-L-lysine.. It functions in the pathway protein modification; protein ubiquitination. In terms of biological role, E3 ubiquitin-protein ligase which accepts ubiquitin from an E2 ubiquitin-conjugating enzyme and then transfers it to targeted substrates, promoting their degradation by the proteasome. Together with UBR4, component of the N-end rule pathway: ubiquitinates proteins bearing specific N-terminal residues that are destabilizing according to the N-end rule, leading to their degradation. Does not ubiquitinate proteins that are acetylated at the N-terminus. Together with UBR4, part of a protein quality control pathway that catalyzes ubiquitination and degradation of proteins that have been oxidized in response to reactive oxygen species (ROS): recognizes proteins with an Arg-CysO3(H) degron at the N-terminus, and mediates assembly of heterotypic 'Lys-63'-/'Lys-27'-linked branched ubiquitin chains on oxidized proteins, leading to their degradation by autophagy. Catalytic component of the SIFI complex, a multiprotein complex required to inhibit the mitochondrial stress response after a specific stress event has been resolved: ubiquitinates and degrades (1) components of the HRI-mediated signaling of the integrated stress response, such as DELE1 and EIF2AK1/HRI, as well as (2) unimported mitochondrial precursors. Within the SIFI complex, UBR4 initiates ubiquitin chain that are further elongated or branched by KCMF1. The polypeptide is E3 ubiquitin-protein ligase KCMF1 (Homo sapiens (Human)).